We begin with the raw amino-acid sequence, 856 residues long: DNA mismatch repair protein MutS (856 aa).

617–624 (GPNMGGKS) provides a ligand contact to ATP.

It belongs to the DNA mismatch repair MutS family.

In terms of biological role, this protein is involved in the repair of mismatches in DNA. It is possible that it carries out the mismatch recognition step. This protein has a weak ATPase activity. This is DNA mismatch repair protein MutS from Psychromonas ingrahamii (strain DSM 17664 / CCUG 51855 / 37).